The chain runs to 340 residues: MTNNKLILAIETSCDETSVSVIKNGTELLSNTVLSQIDSHKRFGGVVPEVASRHHVEGITATIDESLVSAKVKMEDIDAIAVTQGPGLIGALLIGINAAKALAFAYDKPIIPVHHIAGHIYANHLEQPLTFPLMSLIVSGGHTELVYMKNHLDFEVIGETRDDAVGEAYDKVARTINLPYPGGPHIDRLAAKGKDVYDFPRVWLEKDSYDFSFSGLKSAVINKLHNLRQKNIEIVAEDVATSFQNSVVEVLTYKAIHACKTYNVNRLIVAGGVASNKGLRNALSEACKKEGIHLTIPSPVLCTDNAAMIGAAGYYLYQAGLRGDLALNGQNNIDIETFSV.

Fe cation is bound by residues histidine 115 and histidine 119. Substrate contacts are provided by residues 137–141 (IVSGG), aspartate 170, glycine 183, aspartate 187, and asparagine 276. Aspartate 304 serves as a coordination point for Fe cation.

This sequence belongs to the KAE1 / TsaD family. It depends on Fe(2+) as a cofactor.

Its subcellular location is the cytoplasm. It catalyses the reaction L-threonylcarbamoyladenylate + adenosine(37) in tRNA = N(6)-L-threonylcarbamoyladenosine(37) in tRNA + AMP + H(+). In terms of biological role, required for the formation of a threonylcarbamoyl group on adenosine at position 37 (t(6)A37) in tRNAs that read codons beginning with adenine. Is involved in the transfer of the threonylcarbamoyl moiety of threonylcarbamoyl-AMP (TC-AMP) to the N6 group of A37, together with TsaE and TsaB. TsaD likely plays a direct catalytic role in this reaction. This Staphylococcus epidermidis (strain ATCC 35984 / DSM 28319 / BCRC 17069 / CCUG 31568 / BM 3577 / RP62A) protein is tRNA N6-adenosine threonylcarbamoyltransferase.